A 554-amino-acid polypeptide reads, in one-letter code: Propanediol dehydratase large subunit (554 aa).

Belongs to the diol/glycerol dehydratase large subunit family. The propanediol dehydratase enzyme is a heterotrimeric complex composed of a large (PduC), a medium (PduD) and a small (PduE) subunit. It depends on adenosylcob(III)alamin as a cofactor.

The protein resides in the bacterial microcompartment. It carries out the reaction propane-1,2-diol = propanal + H2O. The protein operates within polyol metabolism; 1,2-propanediol degradation. Part of the PduCDE complex that catalyzes the dehydration of 1,2-propanediol (1,2-PD) to propionaldehyde. This subunit is directly targeted to the bacterial microcompartment (BMC). Its function is as follows. Expression of a cosmid containing the full 21-gene pdu operon in E.coli allows E.coli to grow on 1,2-propanediol (1,2-PD) with the appearance of BMCs in its cytoplasm. In terms of biological role, the 1,2-PD-specific bacterial microcompartment (BMC) concentrates low levels of 1,2-PD catabolic enzymes, concentrates volatile reaction intermediates thus enhancing pathway flux and keeps the level of toxic, mutagenic propionaldehyde low. The protein is Propanediol dehydratase large subunit of Citrobacter freundii.